Consider the following 478-residue polypeptide: ATP synthase subunit beta (478 aa).

An ATP-binding site is contributed by 160–167 (GGAGVGKT).

This sequence belongs to the ATPase alpha/beta chains family. In terms of assembly, F-type ATPases have 2 components, CF(1) - the catalytic core - and CF(0) - the membrane proton channel. CF(1) has five subunits: alpha(3), beta(3), gamma(1), delta(1), epsilon(1). CF(0) has three main subunits: a(1), b(2) and c(9-12). The alpha and beta chains form an alternating ring which encloses part of the gamma chain. CF(1) is attached to CF(0) by a central stalk formed by the gamma and epsilon chains, while a peripheral stalk is formed by the delta and b chains.

It is found in the cell inner membrane. It catalyses the reaction ATP + H2O + 4 H(+)(in) = ADP + phosphate + 5 H(+)(out). In terms of biological role, produces ATP from ADP in the presence of a proton gradient across the membrane. The catalytic sites are hosted primarily by the beta subunits. This Orientia tsutsugamushi (strain Boryong) (Rickettsia tsutsugamushi) protein is ATP synthase subunit beta.